A 340-amino-acid polypeptide reads, in one-letter code: Uroporphyrinogen decarboxylase (340 aa).

Substrate is bound by residues 21 to 25, Phe-40, Asp-71, Tyr-147, Ser-202, and His-316; that span reads RQAGR.

Belongs to the uroporphyrinogen decarboxylase family. In terms of assembly, homodimer.

It is found in the cytoplasm. It catalyses the reaction uroporphyrinogen III + 4 H(+) = coproporphyrinogen III + 4 CO2. The protein operates within porphyrin-containing compound metabolism; protoporphyrin-IX biosynthesis; coproporphyrinogen-III from 5-aminolevulinate: step 4/4. Its function is as follows. Catalyzes the decarboxylation of four acetate groups of uroporphyrinogen-III to yield coproporphyrinogen-III. The polypeptide is Uroporphyrinogen decarboxylase (Wolinella succinogenes (strain ATCC 29543 / DSM 1740 / CCUG 13145 / JCM 31913 / LMG 7466 / NCTC 11488 / FDC 602W) (Vibrio succinogenes)).